The primary structure comprises 384 residues: tRNA-specific 2-thiouridylase MnmA (384 aa).

Residues 13 to 20 (GLSGGVDS) and Met-39 each bind ATP. Positions 99 to 101 (NPD) are interaction with target base in tRNA. The active-site Nucleophile is the Cys-104. Cys-104 and Cys-215 are oxidised to a cystine. Residue Gly-128 coordinates ATP. An interaction with tRNA region spans residues 165–167 (KDQ). The active-site Cysteine persulfide intermediate is Cys-215. The interaction with tRNA stretch occupies residues 333 to 334 (RY).

The protein belongs to the MnmA/TRMU family.

The protein localises to the cytoplasm. The catalysed reaction is S-sulfanyl-L-cysteinyl-[protein] + uridine(34) in tRNA + AH2 + ATP = 2-thiouridine(34) in tRNA + L-cysteinyl-[protein] + A + AMP + diphosphate + H(+). Catalyzes the 2-thiolation of uridine at the wobble position (U34) of tRNA, leading to the formation of s(2)U34. The protein is tRNA-specific 2-thiouridylase MnmA of Albidiferax ferrireducens (strain ATCC BAA-621 / DSM 15236 / T118) (Rhodoferax ferrireducens).